We begin with the raw amino-acid sequence, 210 residues long: Insulin receptor (210 aa).

The Fibronectin type-III domain occupies 1–96; the sequence is VSNSSSQIIL…SQILKELEES (96 aa). N-linked (GlcNAc...) asparagine glycosylation is found at Asn3, Asn21, and Asn68. Positions 55–78 are disordered; the sequence is WSPPFESEDSQKHNQSEYEDSAGE. The interval 103–111 is insulin-binding; it reads EDYLHNVVF. The segment at 116-169 is disordered; that stretch reads TSSGTGAEDPRPSRKRRSLGDVGNVTVAVPTVAAFPNTSSTSTPTSPEEHRPFE. The Extracellular portion of the chain corresponds to 133–210; sequence SLGDVGNVTV…EERCSVAAYV (78 aa). Residues 137 to 161 are compositionally biased toward low complexity; the sequence is VGNVTVAVPTVAAFPNTSSTSTPTS. N-linked (GlcNAc...) asparagine glycans are attached at residues Asn139 and Asn152. Cys195 and Cys204 are oxidised to a cystine.

The protein belongs to the protein kinase superfamily. Tyr protein kinase family. Insulin receptor subfamily. Tetramer of 2 alpha and 2 beta chains linked by disulfide bonds. The alpha chains carry the insulin-binding regions, while the beta chains carry the kinase domain. Forms a hybrid receptor with IGF1R, the hybrid is a tetramer consisting of 1 alpha chain and 1 beta chain of INSR and 1 alpha chain and 1 beta chain of IGF1R. Interacts with SORBS1 but dissociates from it following insulin stimulation. Binds SH2B2. Activated form of INSR interacts (via phosphorylated Tyrosine) with the PTB/PID domains of IRS1 and SHC1. The sequences surrounding the phosphorylated NPXY motif contribute differentially to either IRS1 or SHC1 recognition. Interacts (via tyrosines in the C-terminus) with IRS2 (via PTB domain and 591-786 AA); the 591-786 would be the primary anchor of IRS2 to INSR while the PTB domain would have a stabilizing action on the interaction with INSR. Interacts with the SH2 domains of the 85 kDa regulatory subunit of PI3K (PIK3R1) in vitro, when autophosphorylated on tyrosine residues. Interacts with SOCS7. Interacts with SOCS3. Interacts with SOCS1. Interacts with CAV2 (tyrosine-phosphorylated form); the interaction is increased with 'Tyr-27'phosphorylation of CAV2. Interacts with ARRB2. Interacts with GRB10; this interaction blocks the association between IRS1/IRS2 and INSR, significantly reduces insulin-stimulated tyrosine phosphorylation of IRS1 and IRS2 and thus decreases insulin signaling. Interacts with GRB7. Interacts with PDPK1. Interacts with GRB14 (via BPS domain). Interacts (via subunit alpha) with ENPP1 (via 485-599 AA); this interaction blocks autophosphorylation. Interacts with PTPRE. Interacts with STAT5B (via SH2 domain). Interacts with PTPRF. Interacts with ATIC; ATIC together with PRKAA2/AMPK2 and HACD3/PTPLAD1 is proposed to be part of a signaling netwok regulating INSR autophosphorylation and endocytosis. Interacts with the insulin receptor SORL1; this interaction strongly increases its surface exposure, hence strengthens insulin signal reception. Interacts (tyrosine phosphorylated) with CCDC88A/GIV (via SH2-like region); binding requires autophosphorylation of the INSR C-terminal region. Interacts with GNAI3; the interaction is probably mediated by CCDC88A/GIV. Interacts with LMBRD1. Interacts (in response to insulin stimulation) with NCK1; this interaction may recruit PTPN1 to mediate INSR dephosphorylation. After being transported from the endoplasmic reticulum to the Golgi apparatus, the single glycosylated precursor is further glycosylated and then cleaved, followed by its transport to the plasma membrane. In terms of processing, autophosphorylated on tyrosine residues in response to insulin. Dephosphorylated by PTPN1, PTPRE and PTPRF. Dephosphorylated by PTPN2; down-regulates insulin-induced signaling. Post-translationally, S-nitrosylation by BLVRB inhibits the receptor tyrosine kinase, thereby inhibiting insulin signaling.

Its subcellular location is the cell membrane. It is found in the late endosome. The protein resides in the lysosome. It catalyses the reaction L-tyrosyl-[protein] + ATP = O-phospho-L-tyrosyl-[protein] + ADP + H(+). With respect to regulation, activated in response to insulin. Autophosphorylation activates the kinase activity. PTPN1, PTPRE and PTPRF dephosphorylate important tyrosine residues, thereby reducing INSR activity. Inhibited by ENPP1. GRB10 and GRB14 inhibit the catalytic activity of the INSR, they block access of substrates to the activated receptor. SOCS1 and SOCS3 act as negative regulators of INSR activity, they bind to the activated INRS and interfere with the phosphorylation of INSR substrates. Receptor tyrosine kinase which mediates the pleiotropic actions of insulin. Binding of insulin leads to phosphorylation of several intracellular substrates, including, insulin receptor substrates (IRS1, 2, 3, 4), SHC, GAB1, CBL and other signaling intermediates. Each of these phosphorylated proteins serve as docking proteins for other signaling proteins that contain Src-homology-2 domains (SH2 domain) that specifically recognize different phosphotyrosine residues, including the p85 regulatory subunit of PI3K and SHP2. Phosphorylation of IRSs proteins lead to the activation of two main signaling pathways: the PI3K-AKT/PKB pathway, which is responsible for most of the metabolic actions of insulin, and the Ras-MAPK pathway, which regulates expression of some genes and cooperates with the PI3K pathway to control cell growth and differentiation. Binding of the SH2 domains of PI3K to phosphotyrosines on IRS1 leads to the activation of PI3K and the generation of phosphatidylinositol-(3, 4, 5)-triphosphate (PIP3), a lipid second messenger, which activates several PIP3-dependent serine/threonine kinases, such as PDPK1 and subsequently AKT/PKB. The net effect of this pathway is to produce a translocation of the glucose transporter SLC2A4/GLUT4 from cytoplasmic vesicles to the cell membrane to facilitate glucose transport. Moreover, upon insulin stimulation, activated AKT/PKB is responsible for: anti-apoptotic effect of insulin by inducing phosphorylation of BAD; regulates the expression of gluconeogenic and lipogenic enzymes by controlling the activity of the winged helix or forkhead (FOX) class of transcription factors. Another pathway regulated by PI3K-AKT/PKB activation is mTORC1 signaling pathway which regulates cell growth and metabolism and integrates signals from insulin. AKT mediates insulin-stimulated protein synthesis by phosphorylating TSC2 thereby activating mTORC1 pathway. The Ras/RAF/MAP2K/MAPK pathway is mainly involved in mediating cell growth, survival and cellular differentiation of insulin. Phosphorylated IRS1 recruits GRB2/SOS complex, which triggers the activation of the Ras/RAF/MAP2K/MAPK pathway. In addition to binding insulin, the insulin receptor can bind insulin-like growth factors (IGFI and IGFII). When present in a hybrid receptor with IGF1R, binds IGF1. In adipocytes, inhibits lipolysis. The polypeptide is Insulin receptor (INSR) (Macaca mulatta (Rhesus macaque)).